The chain runs to 297 residues: tRNA dimethylallyltransferase (297 aa).

Position 15–22 (15–22 (GPTASGKS)) interacts with ATP. Position 17–22 (17–22 (TASGKS)) interacts with substrate. 2 interaction with substrate tRNA regions span residues 40–43 (DSMQ) and 164–168 (QRIVR).

It belongs to the IPP transferase family. In terms of assembly, monomer. Mg(2+) serves as cofactor.

It carries out the reaction adenosine(37) in tRNA + dimethylallyl diphosphate = N(6)-dimethylallyladenosine(37) in tRNA + diphosphate. Functionally, catalyzes the transfer of a dimethylallyl group onto the adenine at position 37 in tRNAs that read codons beginning with uridine, leading to the formation of N6-(dimethylallyl)adenosine (i(6)A). The chain is tRNA dimethylallyltransferase from Rhizobium etli (strain ATCC 51251 / DSM 11541 / JCM 21823 / NBRC 15573 / CFN 42).